The primary structure comprises 186 residues: Elongation factor P (186 aa).

N-alpha-linked (Rha) arginine glycosylation is present at Arg32.

It belongs to the elongation factor P family. In terms of processing, glycosylated ar Arg-32 by EarP: arginine rhamnosylation is required for EF-P function and rescue of polyproline stalled ribosomes.

It is found in the cytoplasm. It participates in protein biosynthesis; polypeptide chain elongation. Involved in peptide bond synthesis. Stimulates efficient translation and peptide-bond synthesis on native or reconstituted 70S ribosomes in vitro. Probably functions indirectly by altering the affinity of the ribosome for aminoacyl-tRNA, thus increasing their reactivity as acceptors for peptidyl transferase. The sequence is that of Elongation factor P from Shewanella oneidensis (strain ATCC 700550 / JCM 31522 / CIP 106686 / LMG 19005 / NCIMB 14063 / MR-1).